The primary structure comprises 598 residues: DNA ligase (598 aa).

An ATP-binding site is contributed by Asp-258. The N6-AMP-lysine intermediate role is filled by Lys-260. Arg-265, Arg-280, Glu-310, Phe-350, Arg-427, and Lys-433 together coordinate ATP.

Belongs to the ATP-dependent DNA ligase family. The cofactor is Mg(2+).

The catalysed reaction is ATP + (deoxyribonucleotide)n-3'-hydroxyl + 5'-phospho-(deoxyribonucleotide)m = (deoxyribonucleotide)n+m + AMP + diphosphate.. Functionally, DNA ligase that seals nicks in double-stranded DNA during DNA replication, DNA recombination and DNA repair. This is DNA ligase from Sulfolobus acidocaldarius (strain ATCC 33909 / DSM 639 / JCM 8929 / NBRC 15157 / NCIMB 11770).